The sequence spans 432 residues: D-amino acid dehydrogenase (432 aa).

3-17 (VVILGSGVVGVASAW) provides a ligand contact to FAD.

The protein belongs to the DadA oxidoreductase family. FAD is required as a cofactor.

The catalysed reaction is a D-alpha-amino acid + A + H2O = a 2-oxocarboxylate + AH2 + NH4(+). It participates in amino-acid degradation; D-alanine degradation; NH(3) and pyruvate from D-alanine: step 1/1. In terms of biological role, oxidative deamination of D-amino acids. The protein is D-amino acid dehydrogenase of Escherichia coli O127:H6 (strain E2348/69 / EPEC).